The following is a 418-amino-acid chain: MISFLVQKSEAKYWKDVVQNKNKFLKNIGIISGPKLVDTYSNQFEADFLKKCVLIPTSYNKEDLPKDILDCPRIYLIEEEVKSVQTDEKLQIKVLRYVSQILHTTVSEEQYPVPSRFVIYPPLALLSLNSFGTKEWHLFFQSYANVDVKAGLFDIFAREWNVSHIAINEPIPVGDVMRRPLSLKPLYGDFGVLIDGNPSEQDFQKAFWVSCRQNGIYQTWAPLYTMFSRGNSIEKARVLNFSYIKDEIIADLYAGIGYFTFSYVKAGASTVFCWEINPWSVEALRRAALKNGWSIYVVRNGENYEFKVGTHRIVVFLESNVYAAERFSKMNISARHINLGMLPSSEKSWSTATSILKRESHSFIHVHENVKDEDIETYSSEVNSCFSKMLAKNTVCVTNCVKSFSPRVSHIVYDIETV.

S-adenosyl-L-methionine contacts are provided by residues S228, K235, 275–276, and 302–303; these read EI and EN.

Belongs to the class I-like SAM-binding methyltransferase superfamily. TRM5/TYW2 family.

Its subcellular location is the cytoplasm. The protein resides in the nucleus. The catalysed reaction is 4-demethylwyosine(37) in tRNA(Phe) + S-adenosyl-L-methionine = 4-demethyl-7-[(3S)-3-amino-3-carboxypropyl]wyosine(37) in tRNA(Phe) + S-methyl-5'-thioadenosine + H(+). Its pathway is tRNA modification; wybutosine-tRNA(Phe) biosynthesis. S-adenosyl-L-methionine-dependent transferase that acts as a component of the wybutosine biosynthesis pathway. Wybutosine is a hyper modified guanosine with a tricyclic base found at the 3'-position adjacent to the anticodon of eukaryotic phenylalanine tRNA. Catalyzes the transfer of the alpha-amino-alpha-carboxypropyl (acp) group from S-adenosyl-L-methionine to the C-7 position of 4-demethylwyosine (imG-14) to produce wybutosine-86. The chain is tRNA wybutosine-synthesizing protein 2 (trm12) from Schizosaccharomyces pombe (strain 972 / ATCC 24843) (Fission yeast).